A 205-amino-acid polypeptide reads, in one-letter code: Delta-aminolevulinic acid dehydratase (205 aa).

Zn(2+)-binding residues include C117, C119, and C127. K192 functions as the Schiff-base intermediate with substrate in the catalytic mechanism. R202 is a substrate binding site.

The protein belongs to the ALAD family. Homooctamer. Zn(2+) is required as a cofactor.

The catalysed reaction is 2 5-aminolevulinate = porphobilinogen + 2 H2O + H(+). Its pathway is porphyrin-containing compound metabolism; protoporphyrin-IX biosynthesis; coproporphyrinogen-III from 5-aminolevulinate: step 1/4. Functionally, catalyzes an early step in the biosynthesis of tetrapyrroles. Binds two molecules of 5-aminolevulinate per subunit, each at a distinct site, and catalyzes their condensation to form porphobilinogen. In Ruminiclostridium josui (Clostridium josui), this protein is Delta-aminolevulinic acid dehydratase (hemB).